Here is a 71-residue protein sequence, read N- to C-terminus: MYHSYSHDLTNYLYNYFSSTTSWLVFIILSLDTINATFSNITFVDILMETGFTKNRSLDQTTCGIKFGFVN.

A helical membrane pass occupies residues 12–34; sequence YLYNYFSSTTSWLVFIILSLDTI.

The protein resides in the membrane. This is an uncharacterized protein from Schizosaccharomyces pombe (strain 972 / ATCC 24843) (Fission yeast).